The following is a 73-amino-acid chain: RNA-binding protein Hfq (73 aa).

The Sm domain maps to 8–68 (DQFLNQIRKE…ISTFAPQKNV (61 aa)).

The protein belongs to the Hfq family. As to quaternary structure, homohexamer.

Its function is as follows. RNA chaperone that binds small regulatory RNA (sRNAs) and mRNAs to facilitate mRNA translational regulation in response to envelope stress, environmental stress and changes in metabolite concentrations. Also binds with high specificity to tRNAs. The polypeptide is RNA-binding protein Hfq (Bacillus licheniformis (strain ATCC 14580 / DSM 13 / JCM 2505 / CCUG 7422 / NBRC 12200 / NCIMB 9375 / NCTC 10341 / NRRL NRS-1264 / Gibson 46)).